A 387-amino-acid chain; its full sequence is Low specificity L-threonine aldolase (387 aa).

K213 bears the N6-(pyridoxal phosphate)lysine mark. K228 participates in a covalent cross-link: Glycyl lysine isopeptide (Lys-Gly) (interchain with G-Cter in ubiquitin). 2 positions are modified to phosphoserine: S367 and S369. A Phosphothreonine modification is found at T370.

This sequence belongs to the threonine aldolase family. Homotetramer. The cofactor is pyridoxal 5'-phosphate.

It carries out the reaction L-threonine = acetaldehyde + glycine. The enzyme catalyses L-allo-threonine = acetaldehyde + glycine. It functions in the pathway amino-acid biosynthesis; glycine biosynthesis; glycine from L-allo-threonine: step 1/1. The protein operates within amino-acid degradation; L-threonine degradation via aldolase pathway; acetaldehyde and glycine from L-threonine: step 1/1. Functionally, catalyzes the cleavage of L-allo-threonine and L-threonine to glycine and acetaldehyde. This is Low specificity L-threonine aldolase (GLY1) from Saccharomyces cerevisiae (strain ATCC 204508 / S288c) (Baker's yeast).